The following is a 211-amino-acid chain: Bcl-2-related ovarian killer protein homolog B (211 aa).

Positions 32 to 44 (KELCRDFIHSRIT) match the BH4 motif. Positions 67–83 (VSVVLLKLGDELECMRP) match the BH3 motif. The BH1 motif lies at 113–132 (EVIAMGITWGKVVAIYAVAA). A BH2 motif is present at residues 165–179 (WLKKRGGWVDILKCV). A helical membrane pass occupies residues 190–210 (WLSTAVLTWREFIKTMYVYLT).

The protein belongs to the Bcl-2 family. In terms of tissue distribution, expressed strongly in ovary and more weakly in eye. Little expression in other tissues examined.

It is found in the membrane. May play a role in apoptosis. Does not appear to show pro-apoptotic activity when expressed ectopically in early embryos. This Danio rerio (Zebrafish) protein is Bcl-2-related ovarian killer protein homolog B (bokb).